Reading from the N-terminus, the 139-residue chain is Cytochrome c2 (139 aa).

Residues 1 to 25 form the signal peptide; it reads MVKKLLTILSIAATAGSLSIGTASA. Q26 is modified (pyrrolidone carboxylic acid). Positions 38, 41, 42, and 118 each coordinate heme c.

It belongs to the cytochrome c family. In terms of processing, binds 1 heme c group covalently per subunit.

Functionally, cytochrome c2 is found mainly in purple, non-sulfur, photosynthetic bacteria where it functions as the electron donor to the oxidized bacteriochlorophyll in the photophosphorylation pathway. However, it may also have a role in the respiratory chain and is found in some non-photosynthetic bacteria. This chain is Cytochrome c2 (cycA), found in Rhodopseudomonas palustris (strain ATCC BAA-98 / CGA009).